A 116-amino-acid chain; its full sequence is Vesicle-associated membrane protein 2 (116 aa).

The disordered stretch occupies residues 1-33 (MSATAATAPPAAPAGEGGPPAPPPNLTSNRRLQ). An N-acetylserine modification is found at serine 2. At 2–94 (SATAATAPPA…KRKYWWKNLK (93 aa)) the chain is on the cytoplasmic side. The v-SNARE coiled-coil homology domain occupies 31-91 (RLQQTQAQVD…AKLKRKYWWK (61 aa)). The tract at residues 92–116 (NLKMMIILGVICAIILIIIIVYFST) is required for interaction with SEPT8. The chain crosses the membrane as a helical; Anchor for type IV membrane protein span at residues 95 to 114 (MMIILGVICAIILIIIIVYF). Residues 115-116 (ST) are Vesicular-facing.

The protein belongs to the synaptobrevin family. Part of the SNARE core complex containing SNAP25, VAMP2 and STX1A; this complex constitutes the basic catalytic machinery of the complex neurotransmitter release apparatus. Recruited to the SNARE complex following binding of the SNARE complex component STX1A to STXBP1. This complex binds to CPLX1. Interacts with POPDC1 and STX4. Interacts with VAPA and VAPB. Interacts with WDFY2, PRKCZ and PRKCI. Forms a complex with WDFY2 and PRKCZ. Interacts (via N-terminus) with KCNB1 (via N-terminus and C-terminus); stimulates the channel inactivation rate of KCNB1. Interacts with SEPT8; the interaction inhibits interaction of VAMP2 with SYP. Interacts with SYP; the interaction is inhibited by interaction with SEPT8. Interacts with PICALM. Interacts with alpha-synuclein/SNCA. Interacts with STX3. Post-translationally, phosphorylated by PRKCZ in vitro and this phosphorylation is increased in the presence of WDFY2. (Microbial infection) Targeted and hydrolyzed by C.botulinum neurotoxin type B (BoNT/B, botB) which hydrolyzes the 76-Gln-|-Phe-77 bond and probably inhibits neurotransmitter release. In terms of processing, (Microbial infection) Targeted and hydrolyzed by C.botulinum neurotoxin type D (BoNT/D, botD) which probably hydrolyzes the 59-Lys-|-Leu-60 bond and inhibits neurotransmitter release. Note that humans are not known to be infected by C.botulinum type D. Post-translationally, (Microbial infection) Targeted and hydrolyzed by C.botulinum neurotoxin type F (BoNT/F, botF) which hydrolyzes the 58-Gln-|-Lys-59 bond and probably inhibits neurotransmitter release. (Microbial infection) Targeted and hydrolyzed by C.tetani tetanus toxin (tetX) which hydrolyzes the 76-Gln-|-Phe-77 bond and probably inhibits neurotransmitter release. In terms of tissue distribution, nervous system and skeletal muscle.

It localises to the cytoplasmic vesicle. Its subcellular location is the secretory vesicle. It is found in the synaptic vesicle membrane. The protein resides in the cell membrane. In terms of biological role, involved in the targeting and/or fusion of transport vesicles to their target membrane. Major SNARE protein of synaptic vesicles which mediates fusion of synaptic vesicles to release neurotransmitters. Essential for fast vesicular exocytosis and activity-dependent neurotransmitter release as well as fast endocytosis that mediates rapid reuse of synaptic vesicles. Modulates the gating characteristics of the delayed rectifier voltage-dependent potassium channel KCNB1. This is Vesicle-associated membrane protein 2 from Homo sapiens (Human).